Here is a 559-residue protein sequence, read N- to C-terminus: T-complex protein 1 subunit gamma (559 aa).

The cysteines at positions 369 and 375 are disulfide-linked. The segment at 537–559 (GGASVTDGNGQEIPETFGDARDG) is disordered.

This sequence belongs to the TCP-1 chaperonin family. Heterooligomeric complex of about 850 to 900 kDa that forms two stacked rings, 12 to 16 nm in diameter.

Its subcellular location is the cytoplasm. Its function is as follows. Molecular chaperone; assists the folding of proteins upon ATP hydrolysis. Known to play a role, in vitro, in the folding of actin and tubulin. The sequence is that of T-complex protein 1 subunit gamma from Tetrahymena pyriformis.